An 84-amino-acid chain; its full sequence is Small ribosomal subunit protein eS27w (84 aa).

The C4-type zinc-finger motif lies at 39–61 (CQGCFNITTVFSHSQTVVVCGNC).

The protein belongs to the eukaryotic ribosomal protein eS27 family. Requires Zn(2+) as cofactor.

The polypeptide is Small ribosomal subunit protein eS27w (RPS27D) (Arabidopsis thaliana (Mouse-ear cress)).